A 227-amino-acid chain; its full sequence is Cytidylate kinase (227 aa).

12-20 (GPSGAGKGT) serves as a coordination point for ATP.

This sequence belongs to the cytidylate kinase family. Type 1 subfamily.

It localises to the cytoplasm. It catalyses the reaction CMP + ATP = CDP + ADP. The catalysed reaction is dCMP + ATP = dCDP + ADP. This chain is Cytidylate kinase, found in Shigella boydii serotype 18 (strain CDC 3083-94 / BS512).